Consider the following 385-residue polypeptide: Serpin-Z1 (385 aa).

Residues 317 to 341 are RCL; that stretch reads GAEAAAATADGDCGCSLDFVEPPKK.

It belongs to the serpin family.

Probable serine protease inhibitor. The polypeptide is Serpin-Z1 (Arabidopsis thaliana (Mouse-ear cress)).